The following is a 393-amino-acid chain: Chalcone synthase DII (393 aa).

Residue Cys-164 is part of the active site.

It belongs to the thiolase-like superfamily. Chalcone/stilbene synthases family.

The enzyme catalyses (E)-4-coumaroyl-CoA + 3 malonyl-CoA + 3 H(+) = 2',4,4',6'-tetrahydroxychalcone + 3 CO2 + 4 CoA. It participates in secondary metabolite biosynthesis; flavonoid biosynthesis. Its function is as follows. The primary product of this enzyme is 4,2',4',6'-tetrahydroxychalcone (also termed naringenin-chalcone or chalcone) which can under specific conditions spontaneously isomerize into naringenin. This chain is Chalcone synthase DII (CHS-DII), found in Ipomoea batatas (Sweet potato).